A 311-amino-acid polypeptide reads, in one-letter code: Putative ribose-phosphate pyrophosphokinase 2 (311 aa).

ATP-binding positions include 38 to 40 (DGE) and 97 to 98 (RQ). 2 residues coordinate Mg(2+): His131 and Asp171. Asp219 serves as a coordination point for D-ribose 5-phosphate.

The protein belongs to the ribose-phosphate pyrophosphokinase family. Class I subfamily. Homohexamer. The cofactor is Mg(2+).

Its subcellular location is the cytoplasm. The catalysed reaction is D-ribose 5-phosphate + ATP = 5-phospho-alpha-D-ribose 1-diphosphate + AMP + H(+). It functions in the pathway metabolic intermediate biosynthesis; 5-phospho-alpha-D-ribose 1-diphosphate biosynthesis; 5-phospho-alpha-D-ribose 1-diphosphate from D-ribose 5-phosphate (route I): step 1/1. Its function is as follows. Involved in the biosynthesis of the central metabolite phospho-alpha-D-ribosyl-1-pyrophosphate (PRPP) via the transfer of pyrophosphoryl group from ATP to 1-hydroxyl of ribose-5-phosphate (Rib-5-P). The sequence is that of Putative ribose-phosphate pyrophosphokinase 2 from Listeria monocytogenes serotype 4b (strain F2365).